Here is a 432-residue protein sequence, read N- to C-terminus: MLRFAPSPTGDMHIGNLRVAIFNYIVSKQRKEDLVIRIEDTDKDRNIEGKDKEILDILNLFGIDYSVVMYQSENFRFHRAMALQLLQDKRAFNCFCSSDWLDKKREEAKNSKTAYRYDDACASLPDELVIDNEHPFTVRIRKPLEPIIIKDHIKGEIKFEPNDIDSFIIMRQDKTPMYNFACAVDDMLSDISLVIRGEDHVSNTPKQILIREALGYSKNIEYAHLPIILNDDGKKMSKRDDASSVKWLLEEGYLPSAIANYLILIGNKPPKEIFTIQEAIEWFSLENISKSPARFDINMLKHVNKEHLKILDAKELSRYVGFADAQIGEVAKIYLEEASTTKELRAKIALIFAEKNIPDEFKEYAQTIVKIIQKAPYFEEYEDFKNYIIQESGLKGKNFFKPLRILLMGSEHGPDIATVYKHIKNYLGEIVK.

A 'HIGH' region motif is present at residues 6–16 (PSPTGDMHIGN). Residues 235–239 (KMSKR) carry the 'KMSKS' region motif. Lysine 238 contacts ATP.

The protein belongs to the class-I aminoacyl-tRNA synthetase family. Glutamate--tRNA ligase type 1 subfamily. As to quaternary structure, monomer.

The protein localises to the cytoplasm. The catalysed reaction is tRNA(Glu) + L-glutamate + ATP = L-glutamyl-tRNA(Glu) + AMP + diphosphate. Its function is as follows. Catalyzes the attachment of glutamate to tRNA(Glu) in a two-step reaction: glutamate is first activated by ATP to form Glu-AMP and then transferred to the acceptor end of tRNA(Glu). The sequence is that of Glutamate--tRNA ligase 2 from Sulfurimonas denitrificans (strain ATCC 33889 / DSM 1251) (Thiomicrospira denitrificans (strain ATCC 33889 / DSM 1251)).